Consider the following 88-residue polypeptide: Thioredoxin-2 (88 aa).

The region spanning 2–88 is the Thioredoxin domain; sequence SRVIHISSNE…YRNGAKVSEF (87 aa). Residues C31 and C34 each act as nucleophile in the active site. Cysteines 31 and 34 form a disulfide.

This sequence belongs to the thioredoxin family.

Functionally, participates in various redox reactions through the reversible oxidation of its active center dithiol to a disulfide and catalyzes dithiol-disulfide exchange reactions. The sequence is that of Thioredoxin-2 (trxB) from Dictyostelium discoideum (Social amoeba).